Reading from the N-terminus, the 408-residue chain is Putative gustatory receptor 58b (408 aa).

The Cytoplasmic portion of the chain corresponds to 1–44 (MLHPKLGRVMNVVYYHSVVFALMSTTLRIRSCRKCLRLEKVSRT). A helical membrane pass occupies residues 45 to 65 (YTIYSFFVGIFLFLNLYFMVP). The Extracellular portion of the chain corresponds to 66–82 (RIMEDGYMKYNIVLQWN). A helical transmembrane segment spans residues 83 to 103 (FFVMLFLRAIAVVSCYGTLWL). Residues 104–150 (KRHKIIQLYKYSLIYWKRFGHITRAIVDKKELLDLQESLARIMIRKI) are Cytoplasmic-facing. A helical membrane pass occupies residues 151 to 171 (ILLYSAFLCSTVLQYQLLSVI). Residues 172-193 (NPQIFLAFCARLTHFLHFLCVK) are Extracellular-facing. A helical transmembrane segment spans residues 194–214 (MGFFGVLVLLNHQFLVIHLAI). At 215–245 (NALHGRKARKKWKALRSVAAMHLKTLRLARR) the chain is on the cytoplasmic side. The chain crosses the membrane as a helical span at residues 246 to 266 (IFDMFDIANATVFINMFMTAI). Residues 267 to 284 (NILYHAVQYSNSSIKSNG) are Extracellular-facing. An N-linked (GlcNAc...) asparagine glycan is attached at Asn-277. The helical transmembrane segment at 285-305 (WGILFGNGLIVFNFWGTMALM) threads the bilayer. Topologically, residues 306–364 (EMLDSVVTSCNNTGQQLRQLSDLPKVGPKMQRELDVFTMQLRQNRLVYKICGIVELDKP) are cytoplasmic. A helical membrane pass occupies residues 365-385 (ACLSYIGSILSNVIILMQFDL). Over 386–408 (RRQRQPINDRQYLIHLMKNKTKV) the chain is Extracellular. A glycan (N-linked (GlcNAc...) asparagine) is linked at Asn-404.

It belongs to the insect chemoreceptor superfamily. Gustatory receptor (GR) family. Gr22e subfamily. As to expression, expressed in the adult labellar chemosensory neurons, labral sense organ and thorax. In larvae, is in neurons of the terminal external chemosensory organ as well as in the dorsal pharyngeal sense organ.

The protein resides in the cell membrane. Functionally, probable gustatory receptor which mediates acceptance or avoidance behavior, depending on its substrates. This Drosophila melanogaster (Fruit fly) protein is Putative gustatory receptor 58b (Gr58b).